We begin with the raw amino-acid sequence, 185 residues long: Guanylate kinase (185 aa).

One can recognise a Guanylate kinase-like domain in the interval 4–181; sequence GALYVVSGPS…ACNDLISIIE (178 aa). Position 11–18 (11–18) interacts with ATP; that stretch reads GPSGAGKS.

It belongs to the guanylate kinase family.

Its subcellular location is the cytoplasm. It catalyses the reaction GMP + ATP = GDP + ADP. Essential for recycling GMP and indirectly, cGMP. The sequence is that of Guanylate kinase from Fusobacterium nucleatum subsp. nucleatum (strain ATCC 25586 / DSM 15643 / BCRC 10681 / CIP 101130 / JCM 8532 / KCTC 2640 / LMG 13131 / VPI 4355).